Consider the following 367-residue polypeptide: 1-deoxy-D-xylulose 5-phosphate reductoisomerase (367 aa).

NADPH-binding residues include Thr10, Gly11, Ser12, Ile13, Gly34, Lys35, Asn36, and Asn112. Residue Lys113 coordinates 1-deoxy-D-xylulose 5-phosphate. Glu114 serves as a coordination point for NADPH. A Mn(2+)-binding site is contributed by Asp138. Ser139, Glu140, Ser164, and His186 together coordinate 1-deoxy-D-xylulose 5-phosphate. Glu140 is a binding site for Mn(2+). NADPH is bound at residue Gly192. Ser199, Asn204, Lys205, and Glu208 together coordinate 1-deoxy-D-xylulose 5-phosphate. Residue Glu208 participates in Mn(2+) binding.

The protein belongs to the DXR family. Mg(2+) serves as cofactor. Mn(2+) is required as a cofactor.

It catalyses the reaction 2-C-methyl-D-erythritol 4-phosphate + NADP(+) = 1-deoxy-D-xylulose 5-phosphate + NADPH + H(+). Its pathway is isoprenoid biosynthesis; isopentenyl diphosphate biosynthesis via DXP pathway; isopentenyl diphosphate from 1-deoxy-D-xylulose 5-phosphate: step 1/6. Catalyzes the NADPH-dependent rearrangement and reduction of 1-deoxy-D-xylulose-5-phosphate (DXP) to 2-C-methyl-D-erythritol 4-phosphate (MEP). The polypeptide is 1-deoxy-D-xylulose 5-phosphate reductoisomerase (Thermus thermophilus (strain ATCC BAA-163 / DSM 7039 / HB27)).